A 650-amino-acid chain; its full sequence is Acetyl-coenzyme A synthetase (650 aa).

Residues 191–194 (RGGR), T311, and N335 each bind CoA. Residues 387–389 (GEP), 411–416 (DTWWQT), D501, and R516 contribute to the ATP site. S524 is a binding site for CoA. R527 is an ATP binding site. Positions 538, 540, and 543 each coordinate Mg(2+). R585 provides a ligand contact to CoA. N6-acetyllysine is present on K610.

The protein belongs to the ATP-dependent AMP-binding enzyme family. Requires Mg(2+) as cofactor. Post-translationally, acetylated. Deacetylation by the SIR2-homolog deacetylase activates the enzyme.

The catalysed reaction is acetate + ATP + CoA = acetyl-CoA + AMP + diphosphate. Catalyzes the conversion of acetate into acetyl-CoA (AcCoA), an essential intermediate at the junction of anabolic and catabolic pathways. AcsA undergoes a two-step reaction. In the first half reaction, AcsA combines acetate with ATP to form acetyl-adenylate (AcAMP) intermediate. In the second half reaction, it can then transfer the acetyl group from AcAMP to the sulfhydryl group of CoA, forming the product AcCoA. This Vibrio parahaemolyticus serotype O3:K6 (strain RIMD 2210633) protein is Acetyl-coenzyme A synthetase.